A 518-amino-acid polypeptide reads, in one-letter code: GMP synthase [glutamine-hydrolyzing] (518 aa).

Residues 6–200 enclose the Glutamine amidotransferase type-1 domain; the sequence is RLLIIDFGSQ…FVRLAGFKGD (195 aa). C84 acts as the Nucleophile in catalysis. Residues H175 and E177 contribute to the active site. Residues 201–393 form the GMPS ATP-PPase domain; the sequence is WTMGAYREEA…LGLPESFIGR (193 aa). 228-234 is a binding site for ATP; that stretch reads SGGVDSS.

As to quaternary structure, homodimer.

The catalysed reaction is XMP + L-glutamine + ATP + H2O = GMP + L-glutamate + AMP + diphosphate + 2 H(+). The protein operates within purine metabolism; GMP biosynthesis; GMP from XMP (L-Gln route): step 1/1. In terms of biological role, catalyzes the synthesis of GMP from XMP. In Cereibacter sphaeroides (strain ATCC 17023 / DSM 158 / JCM 6121 / CCUG 31486 / LMG 2827 / NBRC 12203 / NCIMB 8253 / ATH 2.4.1.) (Rhodobacter sphaeroides), this protein is GMP synthase [glutamine-hydrolyzing].